We begin with the raw amino-acid sequence, 882 residues long: Alanine--tRNA ligase (882 aa).

Positions 574, 578, 682, and 686 each coordinate Zn(2+). Residues 853–882 (GGRGGGKGALAQGGGLDPRKAREALPGLLP) form a disordered region. The span at 854-868 (GRGGGKGALAQGGGL) shows a compositional bias: gly residues.

Belongs to the class-II aminoacyl-tRNA synthetase family. Zn(2+) is required as a cofactor.

It is found in the cytoplasm. It catalyses the reaction tRNA(Ala) + L-alanine + ATP = L-alanyl-tRNA(Ala) + AMP + diphosphate. Catalyzes the attachment of alanine to tRNA(Ala) in a two-step reaction: alanine is first activated by ATP to form Ala-AMP and then transferred to the acceptor end of tRNA(Ala). Also edits incorrectly charged Ser-tRNA(Ala) and Gly-tRNA(Ala) via its editing domain. The sequence is that of Alanine--tRNA ligase from Thermus thermophilus (strain ATCC BAA-163 / DSM 7039 / HB27).